Reading from the N-terminus, the 327-residue chain is Undecaprenyl-phosphate 4-deoxy-4-formamido-L-arabinose transferase (327 aa).

A run of 2 helical transmembrane segments spans residues 235–255 (LLSLVGSAIALLGFTFSVLLV) and 270–290 (VFTLFAVLFMFIGAQFVGMGL).

The protein belongs to the glycosyltransferase 2 family.

Its subcellular location is the cell inner membrane. It carries out the reaction UDP-4-deoxy-4-formamido-beta-L-arabinose + di-trans,octa-cis-undecaprenyl phosphate = 4-deoxy-4-formamido-alpha-L-arabinopyranosyl di-trans,octa-cis-undecaprenyl phosphate + UDP. It functions in the pathway glycolipid biosynthesis; 4-amino-4-deoxy-alpha-L-arabinose undecaprenyl phosphate biosynthesis; 4-amino-4-deoxy-alpha-L-arabinose undecaprenyl phosphate from UDP-4-deoxy-4-formamido-beta-L-arabinose and undecaprenyl phosphate: step 1/2. Its pathway is bacterial outer membrane biogenesis; lipopolysaccharide biosynthesis. In terms of biological role, catalyzes the transfer of 4-deoxy-4-formamido-L-arabinose from UDP to undecaprenyl phosphate. The modified arabinose is attached to lipid A and is required for resistance to polymyxin and cationic antimicrobial peptides. The protein is Undecaprenyl-phosphate 4-deoxy-4-formamido-L-arabinose transferase of Yersinia pestis bv. Antiqua (strain Antiqua).